Here is a 499-residue protein sequence, read N- to C-terminus: Probable lipid II flippase MurJ (499 aa).

14 helical membrane-spanning segments follow: residues 4–24 (LFRA…FGYV), 26–46 (DATV…FIAF), 88–108 (LLIT…EEII), 130–150 (FTIL…ILLV), 154–174 (FFVP…SLVI), 184–204 (LALA…FLLF), 227–247 (FLFT…DTFL), 265–285 (IYLL…LALV), 297–317 (TALK…FFLS), 335–355 (LFYT…YSLQ), 375–395 (AFLS…LLNF), 396–416 (GVYS…VYLY), 425–445 (IPFG…GLVY), and 455–475 (FILV…LIIL).

It belongs to the MurJ/MviN family.

The protein resides in the cell inner membrane. It participates in cell wall biogenesis; peptidoglycan biosynthesis. Its function is as follows. Involved in peptidoglycan biosynthesis. Transports lipid-linked peptidoglycan precursors from the inner to the outer leaflet of the cytoplasmic membrane. The protein is Probable lipid II flippase MurJ of Aquifex aeolicus (strain VF5).